The sequence spans 732 residues: Protein DIA2 (732 aa).

3 TPR repeats span residues V15–Y48, I78–N111, and K113–D145. Residues T204–F251 enclose the F-box domain. Phosphoserine is present on S393. LRR repeat units follow at residues L425–G449, F480–F505, W509–Q532, L550–Q574, G579–T602, L616–S637, and L645–K669.

The protein belongs to the DIA2 family. Component of the SCF(DIA2) complex containing CDC53, SKP1, RBX1 and DIA2. Interacts with SKP1.

The protein localises to the nucleus. Its function is as follows. F-box protein component of a SCF (SKP1-CUL1-F-box protein) E3 ubiquitin-protein ligase complex which mediates the ubiquitination and subsequent proteasomal degradation of target proteins. Probably recognizes and binds to phosphorylated target proteins. The SCF(DIA2) complex is specifically involved in the pheromone induced degradation of phosphorylated TEC1. The SCF(DIA2) complex binds to DNA replication origins. Involved in DNA replication, genome stability, and the control of cell cycle, probably through its association to replication origins to facilitate the ubiquitination of another origin-binding protein. Required for invasive growth and growth under alkaline conditions. The protein is Protein DIA2 (DIA2) of Saccharomyces cerevisiae (strain ATCC 204508 / S288c) (Baker's yeast).